A 346-amino-acid polypeptide reads, in one-letter code: Anthranilate phosphoribosyltransferase (346 aa).

5-phospho-alpha-D-ribose 1-diphosphate contacts are provided by residues Gly-80, 83-84, Thr-88, 90-93, 108-116, and Ser-120; these read GD, NIST, and KHGNTAVSS. Gly-80 contacts anthranilate. Position 92 (Ser-92) interacts with Mg(2+). Asn-111 serves as a coordination point for anthranilate. Arg-166 contributes to the anthranilate binding site. Residues Asp-225 and Glu-226 each contribute to the Mg(2+) site.

It belongs to the anthranilate phosphoribosyltransferase family. In terms of assembly, homodimer. It depends on Mg(2+) as a cofactor.

The catalysed reaction is N-(5-phospho-beta-D-ribosyl)anthranilate + diphosphate = 5-phospho-alpha-D-ribose 1-diphosphate + anthranilate. It functions in the pathway amino-acid biosynthesis; L-tryptophan biosynthesis; L-tryptophan from chorismate: step 2/5. Its function is as follows. Catalyzes the transfer of the phosphoribosyl group of 5-phosphorylribose-1-pyrophosphate (PRPP) to anthranilate to yield N-(5'-phosphoribosyl)-anthranilate (PRA). This chain is Anthranilate phosphoribosyltransferase, found in Desulforudis audaxviator (strain MP104C).